We begin with the raw amino-acid sequence, 256 residues long: Peroxisomal membrane protein PMP30B (256 aa).

Belongs to the peroxin-11 family.

Its subcellular location is the peroxisome membrane. Its function is as follows. Involved in peroxisomal proliferation. Could participate in peroxisomal elongation or fission. May be involved in parceling of peroxisomes into regular quanta. In Candida boidinii (Yeast), this protein is Peroxisomal membrane protein PMP30B (PEX11B).